We begin with the raw amino-acid sequence, 209 residues long: High frequency lysogenization protein HflD homolog (209 aa).

A coiled-coil region spans residues 79–121; it reads QGLNAELTRYTLSLMVLERKLNSAKGAMDTLGDRIAGLQRQLD.

This sequence belongs to the HflD family.

It localises to the cytoplasm. Its subcellular location is the cell inner membrane. This Enterobacter sp. (strain 638) protein is High frequency lysogenization protein HflD homolog.